The following is a 523-amino-acid chain: GMP synthase [glutamine-hydrolyzing] (523 aa).

The region spanning 8–205 (KILILDFGSQ…VVNICGCETK (198 aa)) is the Glutamine amidotransferase type-1 domain. Cys-85 acts as the Nucleophile in catalysis. Active-site residues include His-179 and Glu-181. A GMPS ATP-PPase domain is found at 206–398 (WTAENIIEDA…LGLPAEMLNR (193 aa)). ATP is bound at residue 233–239 (SGGVDSS).

Homodimer.

It catalyses the reaction XMP + L-glutamine + ATP + H2O = GMP + L-glutamate + AMP + diphosphate + 2 H(+). The protein operates within purine metabolism; GMP biosynthesis; GMP from XMP (L-Gln route): step 1/1. Functionally, catalyzes the synthesis of GMP from XMP. The sequence is that of GMP synthase [glutamine-hydrolyzing] from Glaesserella parasuis serovar 5 (strain SH0165) (Haemophilus parasuis).